The primary structure comprises 778 residues: Aerobic respiration control sensor protein ArcB (778 aa).

At 1–25 (MKQIRLLAQYYVDLMMKLGLVRFSM) the chain is on the cytoplasmic side. The helical transmembrane segment at 26 to 46 (LLALALVVLAIVVQMAVTMVL) threads the bilayer. Topologically, residues 47 to 57 (HGQVESIDVIR) are periplasmic. Residues 58–78 (SIFFGLLITPWAVYFLSVVVE) traverse the membrane as a helical segment. The Cytoplasmic segment spans residues 79–778 (QLEESRQRLS…KAWVAKATKK (700 aa)). A PAS domain is found at 153–223 (QSSFLRSFLD…ETDEKVFRHN (71 aa)). In terms of domain architecture, PAC spans 226–278 (LTYEQWLDYPDGRKACFEIRKVPYYDRVGKRHGLMGFGRDITERKRYQDALER). Positions 289 to 507 (TISHELRTPL…TFTLTIHAPS (219 aa)) constitute a Histidine kinase domain. H292 is modified (phosphohistidine; by autocatalysis). Positions 527 to 643 (NVLLVEDIEL…ALTAMIKKFW (117 aa)) constitute a Response regulatory domain. A 4-aspartylphosphate modification is found at D576. One can recognise an HPt domain in the interval 678 to 771 (GPKLITDGLA…RHDVEVLKAW (94 aa)). Residue H717 is modified to Phosphohistidine.

In terms of processing, activation requires a sequential transfer of a phosphate group from a His in the primary transmitter domain, to an Asp in the receiver domain and to a His in the secondary transmitter domain.

Its subcellular location is the cell inner membrane. The enzyme catalyses ATP + protein L-histidine = ADP + protein N-phospho-L-histidine.. Functionally, member of the two-component regulatory system ArcB/ArcA. Sensor-regulator protein for anaerobic repression of the arc modulon. Activates ArcA via a four-step phosphorelay. ArcB can also dephosphorylate ArcA by a reverse phosphorelay involving His-717 and Asp-576. This Escherichia coli O157:H7 protein is Aerobic respiration control sensor protein ArcB (arcB).